A 1299-amino-acid chain; its full sequence is Outer capsid protein VP1 (1299 aa).

This sequence belongs to the aquareoviridae outer capsid VP1 protein family.

It localises to the virion. It carries out the reaction a 5'-end diphospho-ribonucleoside in mRNA + GTP + H(+) = a 5'-end (5'-triphosphoguanosine)-ribonucleoside in mRNA + diphosphate. It catalyses the reaction a 5'-end (5'-triphosphoguanosine)-ribonucleoside in mRNA + S-adenosyl-L-methionine = a 5'-end (N(7)-methyl 5'-triphosphoguanosine)-ribonucleoside in mRNA + S-adenosyl-L-homocysteine. Functionally, outer capsid protein involved in mRNA capping. Catalyzes the last 3 enzymatic activities for formation of the 5' cap structure on the viral plus-strand transcripts, namely the RNA guanylyltransferase, RNA-7N- and RNA-2'O-methyltransferase activities. This Aquareovirus C (isolate Golden shiner/USA/GSRV/1977) (AQRV-C) protein is Outer capsid protein VP1 (S1).